Here is a 490-residue protein sequence, read N- to C-terminus: MGQIVTFFQEVPHVIEEVMNIVLIALSILAILKGLYNVATCGLIGLVTFLLLSGRSCSLIYKGTYELQTLELNMETLNMTMPLSCTKNNSHHYIRVGNETGLELTLTNTSILNHKFCNLSDAHKRNLYDHSLMSIISTFHLSIPNFNQYEAMSCDFNGGKITVQYNLSHSFAVDAAGHCGTLANGVLQTFMRMAWGGSYIALDSGRGNWDCIMTSYQYLIIQNTTWDDHCQFSRPSPIGYLGLLSQRTRDIYISRRLLGTFTWTLSDSEGNETPGGYCLTRWMLIEAELKCFGNTAVAKCNEKHDEEFCDMLRLFDFNKQAIRRLKTEAQMSIQLINKAVNALINDQLIMKNHLRDIMGIPYCNYSRYWYLNHTSTGKTSLPRCWLISNGSYLNETKFSDDIEQQADNMITEMLQKEYIDRQGKTPLGLVDLFVFSTSFYLISIFLHLVKIPTHRHIVGKPCPKPHRLNHMGICSCGLYKQPGVPVRWKR.

Residue Gly2 is the site of N-myristoyl glycine; by host attachment. The Extracellular segment spans residues 2-17; that stretch reads GQIVTFFQEVPHVIEE. Residues 18-33 form a helical membrane-spanning segment; it reads VMNIVLIALSILAILK. Residues 34 to 58 are Cytoplasmic-facing; it reads GLYNVATCGLIGLVTFLLLSGRSCS. Residue Cys57 participates in Zn(2+) binding. Residues 59 to 431 are Extracellular-facing; that stretch reads LIYKGTYELQ…QGKTPLGLVD (373 aa). 6 N-linked (GlcNAc...) asparagine; by host glycosylation sites follow: Asn78, Asn88, Asn98, Asn108, Asn118, and Asn166. Intrachain disulfides connect Cys85/Cys230, Cys117/Cys154, Cys179/Cys211, Cys278/Cys291, Cys300/Cys309, and Cys363/Cys384. Residue Asn223 is glycosylated (N-linked (GlcNAc...) asparagine; by host). 4 N-linked (GlcNAc...) asparagine; by host glycosylation sites follow: Asn364, Asn372, Asn389, and Asn394. The chain crosses the membrane as a helical span at residues 432–452; it reads LFVFSTSFYLISIFLHLVKIP. Topologically, residues 453–490 are cytoplasmic; that stretch reads THRHIVGKPCPKPHRLNHMGICSCGLYKQPGVPVRWKR. Positions 454, 456, 462, 466, 474, and 476 each coordinate Zn(2+).

This sequence belongs to the arenaviridae GPC protein family. Interacts with glycoprotein G2. Part of the GP complex (GP-C) together with glycoprotein G1 and glycoprotein G2. The GP-complex interacts with protein Z, which interacts with ribonucleocapsid; these interactions may induce virion budding. As to quaternary structure, homotrimer; disulfide-linked. In pre-fusion state, G1 homotrimers bind G2 homotrimers via ionic interactions. Part of the GP complex (GP-C) together with glycoprotein G2 and the stable signal peptide. Interacts with the primary host receptor DAG1 on the cell surface; this interaction occurs at pH 8.0 but not at pH 6.0 and below. Upon virus internalization and at endosomal pH, interacts with the host lysosomal protein LAMP1; this interaction mediates G1 dissociation from GP-C and membrane fusion. The GP-complex interacts with protein Z, which interacts with ribonucleocapsid; these interactions may induce virion budding. In terms of assembly, homotrimer. Interacts with the stable signal peptide. In pre-fusion state, G2 homotrimers bind G1 homotrimers via ionic interactions. Part of the GP complex (GP-C) together with glycoprotein G1 and the stable signal peptide. Acidification in the endosome triggers rearrangements, which ultimately leads to a 6 helix bundle formed by the two heptad repeat domains (HR1 and HR2) in post-fusion state. The GP-complex interacts with protein Z, which interacts with ribonucleocapsid; these interactions may induce virion budding. Post-translationally, specific enzymatic cleavages in vivo yield mature proteins. GP-C polyprotein is cleaved in the endoplasmic reticulum by the host protease MBTPS1. Only cleaved glycoprotein is incorporated into virions. In terms of processing, the SSP remains stably associated with the GP complex following cleavage by signal peptidase and plays crucial roles in the trafficking of GP through the secretory pathway. Myristoylation is necessary for GP2-mediated fusion activity.

Its subcellular location is the virion membrane. The protein localises to the host endoplasmic reticulum membrane. It localises to the host Golgi apparatus membrane. It is found in the host cell membrane. Functionally, functions as a cleaved signal peptide that is retained as the third component of the GP complex (GP-C). Helps to stabilize the spike complex in its native conformation. The SSP is required for efficient glycoprotein expression, post-translational maturation cleavage of G1 and G2, glycoprotein transport to the cell surface plasma membrane, formation of infectious virus particles, and acid pH-dependent glycoprotein-mediated cell fusion. Its function is as follows. Forms the virion spikes together with glycoprotein G2. The glycoprotein spike trimers are connected to the underlying matrix. Interacts with the host receptor. Mediates virus attachment to the host primary receptor alpha-dystroglycan DAG1 (alpha-DG) at the cell surface. This attachment induces virion internalization apparently through macropinocytosis. Following endocytosis, there is a pH-dependent switch from binding DAG1 to the host lysosomal receptor LAMP1. This latter binding triggers the dissociation of GP1, exposing the fusion subunit, GP2, such that fusion can occur. Down-modulates host DAG1. Forms the virion spikes together with glycoprotein G1. The glycoprotein spike trimers are connected to the underlying matrix. Class I viral fusion protein that directs fusion of viral and host endosomal membranes, leading to delivery of the nucleocapsid into the cytoplasm. Membrane fusion is mediated by irreversible conformational changes induced by acidification. This Lassa virus (strain GA391) (LASV) protein is Pre-glycoprotein polyprotein GP complex.